A 447-amino-acid polypeptide reads, in one-letter code: Argininosuccinate synthase (447 aa).

ATP is bound by residues 17-25 and Ala-43; that span reads AFSGGLDTS. Tyr-99 serves as a coordination point for L-citrulline. Positions 129 and 131 each coordinate ATP. 3 residues coordinate L-aspartate: Thr-131, Asn-135, and Asp-136. Residue Asn-135 coordinates L-citrulline. ATP is bound at residue Asp-136. Residues Arg-139 and Ser-192 each contribute to the L-citrulline site. Residue Asp-194 coordinates ATP. Residues Thr-201, Glu-203, and Glu-280 each contribute to the L-citrulline site.

The protein belongs to the argininosuccinate synthase family. Type 2 subfamily. Homotetramer.

The protein localises to the cytoplasm. The catalysed reaction is L-citrulline + L-aspartate + ATP = 2-(N(omega)-L-arginino)succinate + AMP + diphosphate + H(+). It participates in amino-acid biosynthesis; L-arginine biosynthesis; L-arginine from L-ornithine and carbamoyl phosphate: step 2/3. The chain is Argininosuccinate synthase from Escherichia coli O8 (strain IAI1).